The following is a 242-amino-acid chain: Type III pantothenate kinase (242 aa).

7–14 (DLGNSRFK) is an ATP binding site. Substrate is bound by residues tyrosine 91 and 98 to 101 (GVDR). Aspartate 100 functions as the Proton acceptor in the catalytic mechanism. Position 121 (threonine 121) interacts with ATP. Residue threonine 171 participates in substrate binding.

It belongs to the type III pantothenate kinase family. Homodimer. NH4(+) serves as cofactor. The cofactor is K(+).

It is found in the cytoplasm. The catalysed reaction is (R)-pantothenate + ATP = (R)-4'-phosphopantothenate + ADP + H(+). The protein operates within cofactor biosynthesis; coenzyme A biosynthesis; CoA from (R)-pantothenate: step 1/5. Its function is as follows. Catalyzes the phosphorylation of pantothenate (Pan), the first step in CoA biosynthesis. The chain is Type III pantothenate kinase from Xylella fastidiosa (strain M23).